The following is a 495-amino-acid chain: 3-octaprenyl-4-hydroxybenzoate carboxy-lyase (495 aa).

Asn-171 provides a ligand contact to Mn(2+). Prenylated FMN is bound by residues 174 to 176 (IYR), 188 to 190 (RWL), and 193 to 194 (RG). Mn(2+) is bound at residue Glu-237. Catalysis depends on Asp-286, which acts as the Proton donor.

The protein belongs to the UbiD family. In terms of assembly, homohexamer. The cofactor is prenylated FMN. Mn(2+) is required as a cofactor.

It is found in the cell membrane. The enzyme catalyses a 4-hydroxy-3-(all-trans-polyprenyl)benzoate + H(+) = a 2-(all-trans-polyprenyl)phenol + CO2. The protein operates within cofactor biosynthesis; ubiquinone biosynthesis. Its function is as follows. Catalyzes the decarboxylation of 3-octaprenyl-4-hydroxy benzoate to 2-octaprenylphenol, an intermediate step in ubiquinone biosynthesis. This Hamiltonella defensa subsp. Acyrthosiphon pisum (strain 5AT) protein is 3-octaprenyl-4-hydroxybenzoate carboxy-lyase.